Consider the following 468-residue polypeptide: Eukaryotic translation initiation factor 3 subunit M (468 aa).

Residues 40 to 61 (VAPLIEPLRQQEQSEEEPDRKQ) form a disordered region. The region spanning 206-377 (DLELAQTHVV…SEFLVHRATY (172 aa)) is the PCI domain. Residues 419–468 (QAAAEEVGQGKSGDKGAKGGDRRRNPQQQQQSQPSQPQQAREVELVGGAE) are disordered. The span at 430-442 (SGDKGAKGGDRRR) shows a compositional bias: basic and acidic residues. Low complexity predominate over residues 444-457 (PQQQQQSQPSQPQQ).

Belongs to the eIF-3 subunit M family. Component of the eukaryotic translation initiation factor 3 (eIF-3) complex.

It localises to the cytoplasm. In terms of biological role, component of the eukaryotic translation initiation factor 3 (eIF-3) complex, which is involved in protein synthesis of a specialized repertoire of mRNAs and, together with other initiation factors, stimulates binding of mRNA and methionyl-tRNAi to the 40S ribosome. The eIF-3 complex specifically targets and initiates translation of a subset of mRNAs involved in cell proliferation. This is Eukaryotic translation initiation factor 3 subunit M from Aspergillus fumigatus (strain CBS 144.89 / FGSC A1163 / CEA10) (Neosartorya fumigata).